The following is a 263-amino-acid chain: uncharacterized protein (263 aa).

This is an uncharacterized protein from Mycobacterium tuberculosis (strain CDC 1551 / Oshkosh).